The following is a 37-amino-acid chain: Large ribosomal subunit protein bL36B (37 aa).

This sequence belongs to the bacterial ribosomal protein bL36 family.

The sequence is that of Large ribosomal subunit protein bL36B from Aeromonas salmonicida (strain A449).